Consider the following 344-residue polypeptide: Uroporphyrinogen decarboxylase (344 aa).

Substrate contacts are provided by residues 23–27 (RQAGR), Asp73, Tyr149, Thr204, and His321.

It belongs to the uroporphyrinogen decarboxylase family. As to quaternary structure, homodimer.

The protein resides in the cytoplasm. It catalyses the reaction uroporphyrinogen III + 4 H(+) = coproporphyrinogen III + 4 CO2. The protein operates within porphyrin-containing compound metabolism; protoporphyrin-IX biosynthesis; coproporphyrinogen-III from 5-aminolevulinate: step 4/4. In terms of biological role, catalyzes the decarboxylation of four acetate groups of uroporphyrinogen-III to yield coproporphyrinogen-III. This is Uroporphyrinogen decarboxylase from Francisella tularensis subsp. novicida (strain U112).